Here is a 306-residue protein sequence, read N- to C-terminus: Small ribosomal subunit protein uS2 (306 aa).

The disordered stretch occupies residues 257 to 306 (EGDKKDETAAAAEVQTSAETEKVADAEKPAEAVAEAEAEAPAADADAEQA). Over residues 275–286 (ETEKVADAEKPA) the composition is skewed to basic and acidic residues. Residues 287 to 300 (EAVAEAEAEAPAAD) are compositionally biased toward low complexity.

Belongs to the universal ribosomal protein uS2 family.

This Streptomyces griseus subsp. griseus (strain JCM 4626 / CBS 651.72 / NBRC 13350 / KCC S-0626 / ISP 5235) protein is Small ribosomal subunit protein uS2.